A 221-amino-acid polypeptide reads, in one-letter code: Toxin coregulated pilus biosynthesis protein P (221 aa).

Positions 5–109 (RVIYQFPDNL…VKLQGYRINI (105 aa)) form a DNA-binding region, ompR/PhoB-type. Residues 143–163 (VVPYLVFSALYVALLPVIWWS) form a helical membrane-spanning segment.

It is found in the cell membrane. Functionally, involved in TCP pilus biogenesis. In Vibrio cholerae serotype O1 (strain ATCC 39315 / El Tor Inaba N16961), this protein is Toxin coregulated pilus biosynthesis protein P (tcpP).